The chain runs to 872 residues: Alanine--tRNA ligase (872 aa).

4 residues coordinate Zn(2+): histidine 567, histidine 571, cysteine 669, and histidine 673.

The protein belongs to the class-II aminoacyl-tRNA synthetase family. Requires Zn(2+) as cofactor.

The protein localises to the cytoplasm. It catalyses the reaction tRNA(Ala) + L-alanine + ATP = L-alanyl-tRNA(Ala) + AMP + diphosphate. In terms of biological role, catalyzes the attachment of alanine to tRNA(Ala) in a two-step reaction: alanine is first activated by ATP to form Ala-AMP and then transferred to the acceptor end of tRNA(Ala). Also edits incorrectly charged Ser-tRNA(Ala) and Gly-tRNA(Ala) via its editing domain. The sequence is that of Alanine--tRNA ligase from Streptococcus pneumoniae (strain CGSP14).